The following is an 859-amino-acid chain: MQEQYNPSEIEALVQKHWHDNKTFEVTEDANKEKFYCLSMFPYPSGRLHMGHVRNYTIGDVVARFQRLQGKNVLQPIGWDSFGLPAENAAINNKTAPAPWTYQNIEYMKNQLKLLGFGYDWSREIATCTPEYYRWEQWFFTKLYEKGLVYKKTASVNWCPNDETVLANEQVQDGCCWRCDTPVEQKEIPQWFIKITAYAEELLNDIDTLDGWPEQVKTMQRNWIGRSEGVEMTFGVAGSDKSFDIYTTRPDTLMGVTYVAIAAGHPLAELAAQSNPELAQFIEECKNSTTSEADLATMEKRGVATGLYAIHPISGKQVPIWAANFVLMNYGTGAVMSVPGHDQRDYEFAKKYNLPIEAVIKPVDGELDISEAAYTEKGVLFNSGEFDGLDFDGAFNAIADKLVAEGKGKRQVNYRLRDWGVSRQRYWGAPIPMVTLADGTVIPTPEDQLPVILPEDVVMDGIQSPIKADKEWAKTQVNGQDALRETDTFDTFMESSWYYARYCSPQADQMLDPTKANYWLPVDQYIGGIEHACMHLLYFRFFHKLLRDAGLVNSNEPAKQLLTQGMVLADAFYYTNDKGARVWVSPLDVVTTEKDDKGRVTKAIDKDGNELVYTGMCKMSKSKNNGIDPQVMVEKYGADTVRLFMMFASPPELTLEWQESGVEGAHRFIKRLWKLASDYVAQDNSEALDVSKLTSEQKALRREVHKTIAKVTDDIGRRQMFNTAVAAVMELMNHLQKAPQTTGQDRAIIGEALTAVVRLLYPIIPHVSFTLWNELGNTNSIEDSQWPVVDESALVEDSKLIVVQVNGKVRAKITVAADADQASVEALGMADEQVIKYLDGVTVRKVIYVPGKLLSIVAN.

A 'HIGH' region motif is present at residues Pro42–His52. The 'KMSKS' region signature appears at Lys618 to Ser622. Residue Lys621 coordinates ATP.

This sequence belongs to the class-I aminoacyl-tRNA synthetase family.

The protein resides in the cytoplasm. It catalyses the reaction tRNA(Leu) + L-leucine + ATP = L-leucyl-tRNA(Leu) + AMP + diphosphate. This chain is Leucine--tRNA ligase, found in Shewanella sp. (strain MR-7).